We begin with the raw amino-acid sequence, 256 residues long: Small ribosomal subunit protein eS1 (256 aa).

Alanine 2 carries the post-translational modification N-acetylalanine; partial.

This sequence belongs to the eukaryotic ribosomal protein eS1 family. In terms of assembly, component of the small ribosomal subunit. Mature ribosomes consist of a small (40S) and a large (60S) subunit. The 40S subunit contains about 33 different proteins and 1 molecule of RNA (18S). The 60S subunit contains about 49 different proteins and 3 molecules of RNA (25S, 5.8S and 5S).

It is found in the cytoplasm. The protein is Small ribosomal subunit protein eS1 (rps1) of Sclerotinia sclerotiorum (strain ATCC 18683 / 1980 / Ss-1) (White mold).